We begin with the raw amino-acid sequence, 182 residues long: Putative manganese efflux pump MntP (182 aa).

A run of 6 helical transmembrane segments spans residues 6–26 (LIPL…VSLG), 37–57 (ILYI…IGMV), 71–91 (HFAG…SSIL), 101–121 (IGIS…SVGL), 131–151 (IITI…GLLI), and 162–182 (YGEI…LFPI).

Belongs to the MntP (TC 9.B.29) family.

It localises to the cell membrane. In terms of biological role, probably functions as a manganese efflux pump. The protein is Putative manganese efflux pump MntP of Bacillus anthracis (strain A0248).